The sequence spans 167 residues: NAD(P)H-quinone oxidoreductase subunit I, chloroplastic (167 aa).

4Fe-4S ferredoxin-type domains are found at residues 55 to 84 (GRIH…VDWK) and 95 to 124 (LNYS…MTEE). Positions 64, 67, 70, 74, 104, 107, 110, and 114 each coordinate [4Fe-4S] cluster.

The protein belongs to the complex I 23 kDa subunit family. NDH is composed of at least 16 different subunits, 5 of which are encoded in the nucleus. [4Fe-4S] cluster is required as a cofactor.

It is found in the plastid. The protein localises to the chloroplast thylakoid membrane. It carries out the reaction a plastoquinone + NADH + (n+1) H(+)(in) = a plastoquinol + NAD(+) + n H(+)(out). The enzyme catalyses a plastoquinone + NADPH + (n+1) H(+)(in) = a plastoquinol + NADP(+) + n H(+)(out). Its function is as follows. NDH shuttles electrons from NAD(P)H:plastoquinone, via FMN and iron-sulfur (Fe-S) centers, to quinones in the photosynthetic chain and possibly in a chloroplast respiratory chain. The immediate electron acceptor for the enzyme in this species is believed to be plastoquinone. Couples the redox reaction to proton translocation, and thus conserves the redox energy in a proton gradient. The sequence is that of NAD(P)H-quinone oxidoreductase subunit I, chloroplastic from Panax ginseng (Korean ginseng).